The following is a 306-amino-acid chain: Acetaldehyde dehydrogenase 2/3 (306 aa).

C130 functions as the Acyl-thioester intermediate in the catalytic mechanism. NAD(+) contacts are provided by residues 161–169 (SAGPGTRKN) and N272.

This sequence belongs to the acetaldehyde dehydrogenase family.

It carries out the reaction acetaldehyde + NAD(+) + CoA = acetyl-CoA + NADH + H(+). The polypeptide is Acetaldehyde dehydrogenase 2/3 (mhpF) (Azoarcus sp. (strain BH72)).